Here is an 885-residue protein sequence, read N- to C-terminus: Chromatin assembly factor 1 subunit A-B (885 aa).

4 disordered regions span residues 1–24 (MPGK…KMVQ), 115–157 (EDSN…NEEC), 176–361 (LDKP…EEEK), and 536–605 (VDSD…QKLK). The segment covering 12–21 (KSSTKSNTKK) has biased composition (low complexity). Composition is skewed to polar residues over residues 116 to 128 (DSNI…SPLN), 134 to 157 (QLAN…NEEC), and 182 to 193 (SAASCTSVSNFS). Composition is skewed to low complexity over residues 211–227 (VSVS…SPDV) and 237–254 (SSPS…SNKT). Positions 251-376 (SNKTSAEKKK…KAEITRFLQK (126 aa)) form a coiled coil. Residues 255–361 (SAEKKKTKDK…EEKRLKEEEK (107 aa)) are compositionally biased toward basic and acidic residues. Acidic residues-rich tracts occupy residues 536–548 (VDSD…EEPG) and 557–573 (ENED…DDDG). The interval 629–665 (CVWCDSKASEIRLLQKFSACILESPAVEEELTQDISS) is necessary for homodimerization, competence for chromatin assembly.

It belongs to the CHAF1A family. As to quaternary structure, homodimer.

It is found in the nucleus. Its function is as follows. Involved in chromatin assembly in DNA replication and DNA repair. This chain is Chromatin assembly factor 1 subunit A-B (chaf1a-b), found in Xenopus laevis (African clawed frog).